The chain runs to 369 residues: Flagellar P-ring protein (369 aa).

The signal sequence occupies residues 1 to 22 (MIKLKQLIAATLLLSAAFGAHA).

Belongs to the FlgI family. The basal body constitutes a major portion of the flagellar organelle and consists of four rings (L,P,S, and M) mounted on a central rod.

It is found in the periplasm. It localises to the bacterial flagellum basal body. Assembles around the rod to form the L-ring and probably protects the motor/basal body from shearing forces during rotation. In Pseudomonas syringae pv. tomato (strain ATCC BAA-871 / DC3000), this protein is Flagellar P-ring protein.